The primary structure comprises 171 residues: Neuronal vesicle trafficking-associated protein 2 (171 aa).

Residues 1 to 10 are compositionally biased toward polar residues; sequence MVKLNSNPSE. The interval 1-21 is disordered; sequence MVKLNSNPSEKGTKPPSVEDG. Residues 1–71 lie on the Cytoplasmic side of the membrane; that stretch reads MVKLNSNPSE…FRVPKIAEFT (71 aa). The chain crosses the membrane as a helical; Signal-anchor for type II membrane protein span at residues 72 to 92; that stretch reads VTILVSLALAFLACIVFLVVY. Topologically, residues 93-171 are lumenal; the sequence is KAFTYDHSCP…EPKPPKTQGH (79 aa).

The protein belongs to the NSG family.

It is found in the membrane. Its subcellular location is the golgi apparatus. The protein localises to the trans-Golgi network membrane. It localises to the cell projection. The protein resides in the dendrite. It is found in the endosome membrane. Its subcellular location is the early endosome membrane. The protein localises to the late endosome membrane. It localises to the lysosome lumen. The protein resides in the cytoplasmic vesicle membrane. It is found in the golgi stack membrane. Its subcellular location is the endosome. The protein localises to the multivesicular body membrane. This is Neuronal vesicle trafficking-associated protein 2 from Homo sapiens (Human).